A 1134-amino-acid polypeptide reads, in one-letter code: Ovochymase-1 (1134 aa).

Positions 1–22 (MGLLASAGLLLLLVIGHPRSLG) are cleaved as a signal peptide. Positions 23–46 (LKCGIRMVNMKSKEPAVGSRFFSR) are cleaved as a propeptide — activation peptide. The Peptidase S1 1 domain occupies 38–296 (AVGSRFFSRI…LMDFITQNLF (259 aa)). N-linked (GlcNAc...) asparagine glycosylation occurs at Asn52. Residues Cys72 and Cys88 are joined by a disulfide bond. His87 acts as the Charge relay system in catalysis. Residue Asn99 is glycosylated (N-linked (GlcNAc...) asparagine). Ca(2+) is bound at residue Glu116. The active-site Charge relay system is the Asp139. 3 disulfide bridges follow: Cys173-Cys243, Cys204-Cys222, and Cys233-Cys262. Catalysis depends on Ser237, which acts as the Charge relay system. CUB domains are found at residues 284-410 (VSEL…VTAV) and 419-531 (CGSL…FTIL). N-linked (GlcNAc...) asparagine glycosylation is present at Asn324. 3 disulfide bridges follow: Cys341–Cys373, Cys419–Cys446, and Cys473–Cys494. N-linked (GlcNAc...) asparagine glycosylation is present at Asn431. Asn507 carries N-linked (GlcNAc...) asparagine glycosylation. One can recognise a Peptidase S1 2 domain in the interval 575–812 (IAGGEEACPH…FLDWIQSKIN (238 aa)). A disulfide bridge connects residues Cys600 and Cys616. Residues His615 and Asp664 each act as charge relay system in the active site. 4 disulfides stabilise this stretch: Cys698–Cys769, Cys729–Cys747, Cys759–Cys788, and Cys846–Cys873. Residue Ser763 is the Charge relay system of the active site. In terms of domain architecture, CUB 3 spans 846 to 957 (CSEAELEKPR…GAFGISYIVL (112 aa)). N-linked (GlcNAc...) asparagine glycosylation occurs at Asn1106.

This sequence belongs to the peptidase S1 family.

Its subcellular location is the secreted. This Homo sapiens (Human) protein is Ovochymase-1 (OVCH1).